We begin with the raw amino-acid sequence, 787 residues long: Serine proteinase stubble (787 aa).

Positions Met-1–Thr-22 are disordered. Residues Met-1 to Glu-58 are Cytoplasmic-facing. The helical; Signal-anchor for type II membrane protein transmembrane segment at Val-59–Pro-80 threads the bilayer. The Extracellular segment spans residues Asp-81 to Arg-787. The N-linked (GlcNAc...) asparagine glycan is linked to Asn-177. A disordered region spans residues Ala-225–Ala-516. Low complexity-rich tracts occupy residues Ser-262–Ser-280, Gln-287–Gln-303, Pro-358–Ser-368, Ser-393–Thr-438, and Thr-449–Ser-485. The span at Gly-502–Ser-512 shows a compositional bias: polar residues. 2 cysteine pairs are disulfide-bonded: Cys-532/Cys-660 and Cys-575/Cys-591. The region spanning Ile-544 to Arg-787 is the Peptidase S1 domain. Residues His-590 and Asp-640 each act as charge relay system in the active site. An N-linked (GlcNAc...) asparagine glycan is attached at Asn-672. Disulfide bonds link Cys-704–Cys-723 and Cys-734–Cys-763. Catalysis depends on Ser-738, which acts as the Charge relay system.

The protein belongs to the peptidase S1 family. In terms of processing, may activate itself by proteolytic cleavage.

The protein resides in the membrane. In terms of biological role, hormone dependent protease required for epithelial morphogenesis, including the formation of bristles, legs, and wings. Has a dual function, detaches imaginal disk cells from extracellular matrices through its extracellular proteolytic domain and transmits an outside-to-inside signal to its intracellular domain to modify the cytoskeleton during morphogenesis. The sequence is that of Serine proteinase stubble (Sb) from Drosophila melanogaster (Fruit fly).